A 908-amino-acid chain; its full sequence is NADH-quinone oxidoreductase subunit G (908 aa).

Positions 2-83 (ATIHVDGKEY…GTFISIDDEE (82 aa)) constitute a 2Fe-2S ferredoxin-type domain. The [2Fe-2S] cluster site is built by Cys34, Cys45, Cys48, and Cys67. The 4Fe-4S His(Cys)3-ligated-type domain occupies 83–122 (EAKQFRESVVEWLMTNHPHDCPVCEEGGNCHLQDMTVMTG). 12 residues coordinate [4Fe-4S] cluster: His99, Cys103, Cys106, Cys112, Cys151, Cys154, Cys157, Cys201, Cys228, Cys231, Cys235, and Cys263. Residues 221–277 (MQFAPSICQQCSIGCNISPGERYGELRRIENRYNGTVNHYFLCDRGRFGYGYVNLKD) enclose the 4Fe-4S Mo/W bis-MGD-type domain.

This sequence belongs to the complex I 75 kDa subunit family. As to quaternary structure, composed of 13 different subunits. Subunits NuoCD, E, F, and G constitute the peripheral sector of the complex. [2Fe-2S] cluster is required as a cofactor. [4Fe-4S] cluster serves as cofactor.

It localises to the cytoplasm. The protein localises to the cell inner membrane. It carries out the reaction a quinone + NADH + 5 H(+)(in) = a quinol + NAD(+) + 4 H(+)(out). Its function is as follows. NDH-1 shuttles electrons from NADH, via FMN and iron-sulfur (Fe-S) centers, to quinones in the respiratory chain. The immediate electron acceptor for the enzyme in this species is believed to be ubiquinone. Couples the redox reaction to proton translocation (for every two electrons transferred, four hydrogen ions are translocated across the cytoplasmic membrane), and thus conserves the redox energy in a proton gradient. The sequence is that of NADH-quinone oxidoreductase subunit G (nuoG) from Escherichia coli (strain K12).